A 449-amino-acid chain; its full sequence is Interferon-related developmental regulator 1 (449 aa).

Residues 1 to 10 show a composition bias toward basic residues; sequence MPKNKKRNAP. Residues 1–41 are disordered; sequence MPKNKKRNAPHRGGGGGGGSGAATSAATTGGPHRTVQPFSD. Over residues 12 to 21 the composition is skewed to gly residues; that stretch reads RGGGGGGGSG. A compositionally biased stretch (low complexity) spans 22-31; it reads AATSAATTGG.

The protein belongs to the IFRD family. In terms of assembly, interacts with PSIP1/LEDGF. As to expression, expressed at high levels in the embryonic brain in the period related to neuroblast proliferation and differentiation.

The protein resides in the cytoplasm. It is found in the cell membrane. It localises to the nucleus. Probably participates in neurogenesis. Could play a role in regulating gene activity in the proliferative and/or differentiative pathways induced by NGF. In Rattus norvegicus (Rat), this protein is Interferon-related developmental regulator 1 (Ifrd1).